The chain runs to 267 residues: Acyl-[acyl-carrier-protein]--UDP-N-acetylglucosamine O-acyltransferase (267 aa).

It belongs to the transferase hexapeptide repeat family. LpxA subfamily. As to quaternary structure, homotrimer.

The protein localises to the cytoplasm. It catalyses the reaction a (3R)-hydroxyacyl-[ACP] + UDP-N-acetyl-alpha-D-glucosamine = a UDP-3-O-[(3R)-3-hydroxyacyl]-N-acetyl-alpha-D-glucosamine + holo-[ACP]. Its pathway is glycolipid biosynthesis; lipid IV(A) biosynthesis; lipid IV(A) from (3R)-3-hydroxytetradecanoyl-[acyl-carrier-protein] and UDP-N-acetyl-alpha-D-glucosamine: step 1/6. Involved in the biosynthesis of lipid A, a phosphorylated glycolipid that anchors the lipopolysaccharide to the outer membrane of the cell. The protein is Acyl-[acyl-carrier-protein]--UDP-N-acetylglucosamine O-acyltransferase of Cupriavidus metallidurans (strain ATCC 43123 / DSM 2839 / NBRC 102507 / CH34) (Ralstonia metallidurans).